Consider the following 659-residue polypeptide: Mitochondrial Rho GTPase 1 (659 aa).

Residues 1–631 (MTKTRIRIVV…LTNDIDYRQT (631 aa)) are Cytoplasmic-facing. Residues 3 to 183 (KTRIRIVVCG…FYLCQRTITN (181 aa)) form the Miro 1 domain. GTP contacts are provided by residues 12 to 19 (GDSGVGKT), 61 to 63 (DTG), and 115 to 118 (NKCD). EF-hand domains follow at residues 199 to 234 (LGVL…CFSK) and 328 to 363 (LGYR…TPGL). Ca(2+)-binding residues include Asp212, Asp214, Asp216, Glu223, Asp341, Asp343, Asp345, and Glu352. One can recognise a Miro 2 domain in the interval 444-609 (RKVLNCYMLG…FIKLTEVALE (166 aa)). GTP is bound by residues 453-460 (GKGNSGKS), 489-493 (ELKGG), and 558-561 (LKAD). Residues 632–652 (IVAISSVVGFASLFTFTALKI) form a helical; Anchor for type IV membrane protein membrane-spanning segment. Residues 653–659 (YSSFKNT) are Mitochondrial intermembrane-facing.

This sequence belongs to the mitochondrial Rho GTPase family.

It is found in the mitochondrion outer membrane. In terms of biological role, mitochondrial GTPase involved in mitochondrial trafficking. Probably involved in control of anterograde transport of mitochondria and their subcellular distribution. This Kluyveromyces lactis (strain ATCC 8585 / CBS 2359 / DSM 70799 / NBRC 1267 / NRRL Y-1140 / WM37) (Yeast) protein is Mitochondrial Rho GTPase 1 (GEM1).